The primary structure comprises 344 residues: Uroporphyrinogen decarboxylase (344 aa).

Substrate contacts are provided by residues 24 to 28 (RQAGR), phenylalanine 43, aspartate 74, tyrosine 151, serine 206, and histidine 323.

Belongs to the uroporphyrinogen decarboxylase family. Homodimer.

It is found in the cytoplasm. The enzyme catalyses uroporphyrinogen III + 4 H(+) = coproporphyrinogen III + 4 CO2. Its pathway is porphyrin-containing compound metabolism; protoporphyrin-IX biosynthesis; coproporphyrinogen-III from 5-aminolevulinate: step 4/4. Functionally, catalyzes the decarboxylation of four acetate groups of uroporphyrinogen-III to yield coproporphyrinogen-III. The protein is Uroporphyrinogen decarboxylase of Rhodobacter capsulatus (Rhodopseudomonas capsulata).